An 891-amino-acid polypeptide reads, in one-letter code: Protein translocase subunit SecA 1 (891 aa).

Residues Gln-86, 104 to 108 (GEGKT), and Asp-493 contribute to the ATP site. Residues 845–873 (KQVAKPIEASHGDGNRKKAPVVKEKEAGR) are compositionally biased toward basic and acidic residues. The tract at residues 845-891 (KQVAKPIEASHGDGNRKKAPVVKEKEAGRNDPCPCGSGKKYKKCCGE) is disordered. Zn(2+)-binding residues include Cys-877, Cys-879, Cys-888, and Cys-889.

It belongs to the SecA family. As to quaternary structure, monomer and homodimer. Part of the essential Sec protein translocation apparatus which comprises SecA, SecYEG and auxiliary proteins SecDF. Other proteins may also be involved. It depends on Zn(2+) as a cofactor.

The protein resides in the cell membrane. It localises to the cytoplasm. The enzyme catalyses ATP + H2O + cellular proteinSide 1 = ADP + phosphate + cellular proteinSide 2.. In terms of biological role, part of the Sec protein translocase complex. Interacts with the SecYEG preprotein conducting channel. Has a central role in coupling the hydrolysis of ATP to the transfer of proteins into and across the cell membrane, serving as an ATP-driven molecular motor driving the stepwise translocation of polypeptide chains across the membrane. In Alkaliphilus metalliredigens (strain QYMF), this protein is Protein translocase subunit SecA 1.